The following is a 124-amino-acid chain: UPF0102 protein BL0935 (124 aa).

It belongs to the UPF0102 family.

This chain is UPF0102 protein BL0935, found in Bifidobacterium longum (strain NCC 2705).